A 308-amino-acid polypeptide reads, in one-letter code: Staphylococcal superantigen-like 4 (308 aa).

A signal peptide spans 1 to 30 (MKITTIAKTSLALGLLTTGVITTTTQAANA). The tract at residues 32–117 (TLSSTKVEAP…TTKQVPTEIN (86 aa)) is disordered. 2 stretches are compositionally biased toward polar residues: residues 33-47 (LSSTKVEAPQSTPPS) and 55-76 (SKPNATTPPSTKVEAPQQTANA). Over residues 77–93 (TTPPSTKVTTPPSTNTP) the composition is skewed to low complexity. A compositionally biased stretch (polar residues) spans 94 to 114 (QPMQSTKSDTPQSPTTKQVPT). The interval 180-278 (VDVFVVLEEN…VIKMKNGGKY (99 aa)) is sialyl Lewis X-binding.

Belongs to the staphylococcal/streptococcal toxin family.

The protein localises to the secreted. In terms of biological role, secreted protein that plays a role in immune innate response inhibition by interfering with host TLR2-mediated pathway. This is Staphylococcal superantigen-like 4 from Staphylococcus aureus (strain NCTC 8325 / PS 47).